A 261-amino-acid chain; its full sequence is Kallikrein 1-related peptidase b3 (261 aa).

Positions 1 to 18 are cleaved as a signal peptide; the sequence is MWFLILFLALSLGGIDAA. Positions 19–24 are cleaved as a propeptide — activation peptide; sequence PPVQSR. The interval 25–107 is segment B1; sequence IVGGFKCEKN…HPGFNMSLMR (83 aa). A Peptidase S1 domain is found at 25-258; it reads IVGGFKCEKN…FTSWIKDTMA (234 aa). 5 disulfides stabilise this stretch: Cys31–Cys173, Cys50–Cys66, Cys152–Cys219, Cys184–Cys198, and Cys209–Cys234. His65 serves as the catalytic Charge relay system. Asn102 carries an N-linked (GlcNAc...) asparagine glycan. The interval 112-164 is segment C; it reads FLEYDYSNDLMLLRLSKPADITDTVKPITLPTEEPKLGSTCLASGWGSITPTK. A segment A region spans residues 112 to 261; that stretch reads FLEYDYSNDL…WIKDTMAKNP (150 aa). Residue Asp120 is the Charge relay system of the active site. The interval 165–261 is segment B2; the sequence is FQFTDDLYCV…WIKDTMAKNP (97 aa). Catalysis depends on Ser213, which acts as the Charge relay system. Zn(2+)-binding residues include His231 and Glu236.

Belongs to the peptidase S1 family. Kallikrein subfamily. As to quaternary structure, 7S nerve growth factor is composed of two alpha chains, a beta dimer composed of identical chains, and two gamma chains. Zn(2+) is required as a cofactor.

The catalysed reaction is Preferential cleavage of Arg-|-Xaa bonds in small molecule substrates. Highly selective action to release kallidin (lysyl-bradykinin) from kininogen involves hydrolysis of Met-|-Xaa or Leu-|-Xaa.. Functionally, 7S NGF alpha chain stabilizes the 7S complex. The beta dimer promotes neurite growth. The gamma chain is an arginine-specific protease; it may also have plasminogen activator activity, as well as mitogenic activity for chick embryo fibroblasts. The protein is Kallikrein 1-related peptidase b3 (Klk1b3) of Mus musculus (Mouse).